The chain runs to 184 residues: ATP synthase subunit b, chloroplastic (184 aa).

Residues 27 to 49 (LATNPINLSVVLGVLIFFGKGVL) traverse the membrane as a helical segment.

Belongs to the ATPase B chain family. In terms of assembly, F-type ATPases have 2 components, F(1) - the catalytic core - and F(0) - the membrane proton channel. F(1) has five subunits: alpha(3), beta(3), gamma(1), delta(1), epsilon(1). F(0) has four main subunits: a(1), b(1), b'(1) and c(10-14). The alpha and beta chains form an alternating ring which encloses part of the gamma chain. F(1) is attached to F(0) by a central stalk formed by the gamma and epsilon chains, while a peripheral stalk is formed by the delta, b and b' chains.

The protein localises to the plastid. The protein resides in the chloroplast thylakoid membrane. Functionally, f(1)F(0) ATP synthase produces ATP from ADP in the presence of a proton or sodium gradient. F-type ATPases consist of two structural domains, F(1) containing the extramembraneous catalytic core and F(0) containing the membrane proton channel, linked together by a central stalk and a peripheral stalk. During catalysis, ATP synthesis in the catalytic domain of F(1) is coupled via a rotary mechanism of the central stalk subunits to proton translocation. Component of the F(0) channel, it forms part of the peripheral stalk, linking F(1) to F(0). The protein is ATP synthase subunit b, chloroplastic of Atropa belladonna (Belladonna).